A 485-amino-acid chain; its full sequence is Aspartyl protease family protein 2 (485 aa).

The N-terminal stretch at 1 to 23 (MVGRRKALLFSLCFFFLSLPSFS) is a signal peptide. The segment at 43-71 (PVSFQPDSDSESLLESEFESGSDSESSSS) is disordered. The span at 50–64 (SDSESLLESEFESGS) shows a compositional bias: acidic residues. The Peptidase A1 domain maps to 142–480 (YFTRLGVGTP…DLASSRVGFA (339 aa)). Catalysis depends on residues aspartate 160 and aspartate 365.

The protein belongs to the peptidase A1 family.

Aspartyl protease. Not able to cleave BAG6. The protein is Aspartyl protease family protein 2 of Arabidopsis thaliana (Mouse-ear cress).